Consider the following 61-residue polypeptide: Metallothionein-2 (61 aa).

An N-acetylmethionine modification is found at Met1. Residues Met1–Cys29 are beta. The a divalent metal cation site is built by Cys5, Cys7, Cys13, Cys15, Cys19, Cys21, Cys24, Cys26, Cys29, Cys33, Cys34, Cys36, Cys37, Cys41, Cys44, Cys48, Cys50, and Cys57. Residues Lys30 to Ala61 are alpha. Position 58 is a phosphoserine (Ser58). Residues Cys59 and Cys60 each coordinate a divalent metal cation.

This sequence belongs to the metallothionein superfamily. Type 1 family.

Metallothioneins have a high content of cysteine residues that bind various heavy metals; these proteins are transcriptionally regulated by both heavy metals and glucocorticoids. The sequence is that of Metallothionein-2 (MT2) from Mesocricetus auratus (Golden hamster).